Here is a 333-residue protein sequence, read N- to C-terminus: Protoheme IX farnesyltransferase (333 aa).

The next 7 membrane-spanning stretches (helical) occupy residues 63-83 (LACT…LNCI), 109-129 (AAFI…VSGV), 132-152 (LAAG…TAIL), 160-180 (IVIG…AASG), 188-208 (WLFA…ALLL), 245-265 (GFGV…LIPF), and 292-312 (WSIF…LPMA).

This sequence belongs to the UbiA prenyltransferase family. Protoheme IX farnesyltransferase subfamily.

The protein localises to the cell inner membrane. The catalysed reaction is heme b + (2E,6E)-farnesyl diphosphate + H2O = Fe(II)-heme o + diphosphate. Its pathway is porphyrin-containing compound metabolism; heme O biosynthesis; heme O from protoheme: step 1/1. Its function is as follows. Converts heme B (protoheme IX) to heme O by substitution of the vinyl group on carbon 2 of heme B porphyrin ring with a hydroxyethyl farnesyl side group. In Prochlorococcus marinus (strain MIT 9303), this protein is Protoheme IX farnesyltransferase.